Reading from the N-terminus, the 224-residue chain is ATP synthase subunit b (224 aa).

A helical membrane pass occupies residues 2 to 22; sequence TPSLGLIFWQSVIFLISFIIL.

It belongs to the ATPase B chain family. F-type ATPases have 2 components, F(1) - the catalytic core - and F(0) - the membrane proton channel. F(1) has five subunits: alpha(3), beta(3), gamma(1), delta(1), epsilon(1). F(0) has three main subunits: a(1), b(2) and c(10-14). The alpha and beta chains form an alternating ring which encloses part of the gamma chain. F(1) is attached to F(0) by a central stalk formed by the gamma and epsilon chains, while a peripheral stalk is formed by the delta and b chains.

It localises to the cell membrane. In terms of biological role, f(1)F(0) ATP synthase produces ATP from ADP in the presence of a proton or sodium gradient. F-type ATPases consist of two structural domains, F(1) containing the extramembraneous catalytic core and F(0) containing the membrane proton channel, linked together by a central stalk and a peripheral stalk. During catalysis, ATP synthesis in the catalytic domain of F(1) is coupled via a rotary mechanism of the central stalk subunits to proton translocation. Component of the F(0) channel, it forms part of the peripheral stalk, linking F(1) to F(0). In Karelsulcia muelleri (strain GWSS) (Sulcia muelleri), this protein is ATP synthase subunit b.